Here is a 93-residue protein sequence, read N- to C-terminus: Em protein H5 (93 aa).

The tract at residues 1 to 93 is disordered; the sequence is MASGQQERSE…IDESKFKTKS (93 aa). Basic and acidic residues-rich tracts occupy residues 7-19, 32-62, and 73-93; these read ERSE…REGE, EAQE…EMGR, and GGER…KTKS.

The protein belongs to the small hydrophilic plant seed protein family.

Functionally, it is thought to provide protection for the cytoplasm during the desiccation stage of embryo development. This chain is Em protein H5 (EMH5), found in Triticum aestivum (Wheat).